A 185-amino-acid chain; its full sequence is Putative 3-methyladenine DNA glycosylase (185 aa).

This sequence belongs to the DNA glycosylase MPG family.

This chain is Putative 3-methyladenine DNA glycosylase, found in Rhizobium meliloti (strain 1021) (Ensifer meliloti).